Here is a 101-residue protein sequence, read N- to C-terminus: Apolipoprotein C-II (101 aa).

The signal sequence occupies residues 1–17 (MGTRFLLALCLVLLVLG). Positions 66–74 (AVDEKLRDL) are lipid binding. The interval 78–101 (STAAMSTYTGIFTDQVLSVLKGEE) is lipoprotein lipase cofactor.

This sequence belongs to the apolipoprotein C2 family. Proapolipoprotein C-II is synthesized as a sialic acid containing glycoprotein which is subsequently desialylated prior to its proteolytic processing. In terms of processing, proapolipoprotein C-II, the major form found in plasma undergoes proteolytic cleavage of its N-terminal hexapeptide to generate apolipoprotein C-II, which occurs as the minor form in plasma.

It is found in the secreted. Component of chylomicrons, very low-density lipoproteins (VLDL), low-density lipoproteins (LDL), and high-density lipoproteins (HDL) in plasma. Plays an important role in lipoprotein metabolism as an activator of lipoprotein lipase. Both proapolipoprotein C-II and apolipoprotein C-II can activate lipoprotein lipase. The chain is Apolipoprotein C-II (APOC2) from Chlorocebus sabaeus (Green monkey).